A 252-amino-acid polypeptide reads, in one-letter code: Hydroxyacylglutathione hydrolase (252 aa).

Zn(2+) contacts are provided by H54, H56, D58, H59, H111, D128, and H166.

This sequence belongs to the metallo-beta-lactamase superfamily. Glyoxalase II family. As to quaternary structure, monomer. The cofactor is Zn(2+).

The enzyme catalyses an S-(2-hydroxyacyl)glutathione + H2O = a 2-hydroxy carboxylate + glutathione + H(+). It participates in secondary metabolite metabolism; methylglyoxal degradation; (R)-lactate from methylglyoxal: step 2/2. Thiolesterase that catalyzes the hydrolysis of S-D-lactoyl-glutathione to form glutathione and D-lactic acid. This Aliivibrio fischeri (strain MJ11) (Vibrio fischeri) protein is Hydroxyacylglutathione hydrolase.